We begin with the raw amino-acid sequence, 450 residues long: Zinc metalloproteinase nas-13 (450 aa).

The N-terminal stretch at 1 to 31 (MPSPTSSSASVFSSHLFFVFCIFSQIAQSYA) is a signal peptide. The N-linked (GlcNAc...) asparagine glycan is linked to Asn68. The Peptidase M12A domain maps to 110 to 303 (NAVRQTYLKW…YKINMLYNCP (194 aa)). Disulfide bonds link Cys152–Cys302 and Cys174–Cys193. Zn(2+) is bound at residue His201. The active site involves Glu202. 2 residues coordinate Zn(2+): His205 and His211. Asn225 carries N-linked (GlcNAc...) asparagine glycosylation. The Cell attachment site signature appears at 349–351 (RGD). 6 disulfides stabilise this stretch: Cys368/Cys404, Cys375/Cys397, Cys384/Cys401, Cys414/Cys450, Cys421/Cys443, and Cys430/Cys447. ShKT domains are found at residues 368-404 (CEDRRKDCEFLARAGHCESRFSIRFMTENCANSCGKC) and 414-450 (CEDARTWCERWANSGMCNQTVFKDYMRQKCAKSCNFC). Residue Asn431 is glycosylated (N-linked (GlcNAc...) asparagine).

Zn(2+) serves as cofactor.

Its subcellular location is the secreted. Functionally, metalloprotease. The protein is Zinc metalloproteinase nas-13 (nas-13) of Caenorhabditis elegans.